The sequence spans 265 residues: F-box only protein 6 (265 aa).

An F-box domain is found at Leu-3–Lys-50. Residues Phe-71–His-252 enclose the FBA domain. Ser-251 carries the phosphoserine modification.

As to quaternary structure, part of a SCF (SKP1-cullin-F-box) protein ligase complex. Interacts with VCP, CHEK1 and CUL1.

The protein resides in the cytoplasm. It functions in the pathway protein modification; protein ubiquitination. Functionally, substrate-recognition component of some SCF (SKP1-CUL1-F-box protein)-type E3 ubiquitin ligase complexes. Involved in endoplasmic reticulum-associated degradation pathway (ERAD) for misfolded lumenal proteins by recognizing and binding sugar chains on unfolded glycoproteins that are retrotranslocated into the cytosol and promoting their ubiquitination and subsequent degradation. Able to recognize and bind denatured glycoproteins, which are modified with not only high-mannose but also complex-type oligosaccharides. Also recognizes sulfated glycans. Also involved in DNA damage response by specifically recognizing activated CHEK1 (phosphorylated on 'Ser-345'), promoting its ubiquitination and degradation. Ubiquitination of CHEK1 is required to ensure that activated CHEK1 does not accumulate as cells progress through S phase, or when replication forks encounter transient impediments during normal DNA replication. In Bos taurus (Bovine), this protein is F-box only protein 6 (FBXO6).